A 289-amino-acid polypeptide reads, in one-letter code: Oxaloacetate decarboxylase (289 aa).

Position 50 (Ser-50) interacts with substrate. Asp-88 contacts Mg(2+). Substrate-binding residues include Arg-159 and His-235.

This sequence belongs to the isocitrate lyase/PEP mutase superfamily. Oxaloacetate decarboxylase family. In terms of assembly, homotetramer; dimer of dimers. Mg(2+) is required as a cofactor.

It catalyses the reaction oxaloacetate + H(+) = pyruvate + CO2. Its function is as follows. Catalyzes the decarboxylation of oxaloacetate into pyruvate. Seems to play a role in maintaining cellular concentrations of bicarbonate and pyruvate. The chain is Oxaloacetate decarboxylase from Pseudomonas putida (strain ATCC 47054 / DSM 6125 / CFBP 8728 / NCIMB 11950 / KT2440).